We begin with the raw amino-acid sequence, 375 residues long: Tryptophan--tRNA ligase (375 aa).

A 'HIGH' region motif is present at residues 81–89 (PSGPVHIGH). A 'KMSKS' region motif is present at residues 258-262 (KMSAS).

The protein belongs to the class-I aminoacyl-tRNA synthetase family.

Its subcellular location is the cytoplasm. It carries out the reaction tRNA(Trp) + L-tryptophan + ATP = L-tryptophyl-tRNA(Trp) + AMP + diphosphate + H(+). This Pyrobaculum aerophilum (strain ATCC 51768 / DSM 7523 / JCM 9630 / CIP 104966 / NBRC 100827 / IM2) protein is Tryptophan--tRNA ligase.